The primary structure comprises 158 residues: Ribonuclease H (158 aa).

The 142-residue stretch at 3–144 (GLKQLLIFTD…CDTLAREAAE (142 aa)) folds into the RNase H type-1 domain. Mg(2+)-binding residues include D12, E50, D72, and D136.

This sequence belongs to the RNase H family. In terms of assembly, monomer. The cofactor is Mg(2+).

It is found in the cytoplasm. It carries out the reaction Endonucleolytic cleavage to 5'-phosphomonoester.. Functionally, endonuclease that specifically degrades the RNA of RNA-DNA hybrids. This is Ribonuclease H from Shewanella loihica (strain ATCC BAA-1088 / PV-4).